We begin with the raw amino-acid sequence, 441 residues long: MDEIESLIGLRPTPLTWPVVIAGDFLGVWDPPPSLPGAANHEISAPTARISCMLIERRDAAARLRRALHRAPVVLLTGPRQAGKTTLSRLVGKSAPECTFDAENPVDATRLADPMLALSGLSGLITIDEAQRIPDLFPVLRVLVDRPVMPARFLILGSASPDLVGLASESLAGRVELVELSGLTVRDVGSSAADRLWLRGGLPPSFTARSNEDSAAWRDGYITTFLERDLAQLGVRIPAATMRRAWTMLAHYHGQLFSGAELARSLDVAQTTARRYLDALTDALVVRQLTPWFANIGKRQRRSPKIYIRDTGLLHRLLGIDDRLALERNPKLGASWEGFVLEQLAALLAPNPLYYWRTQQDAELDLYVELSGRPYGFEIKRTSTPSISRSMRSALVDLQLARLAIVYPGEHRFPLSDTVVAVPADQILTTGSVDELLALLK.

78-85 contributes to the ATP binding site; it reads GPRQAGKT.

This is an uncharacterized protein from Mycobacterium bovis (strain ATCC BAA-935 / AF2122/97).